The primary structure comprises 702 residues: MARTTPIARYRNIGISAHIDAGKTTTTERILFYTGVNHKIGEVHDGAATMDWMEQEQERGITITSAATTAFWSGMAKQFDAHRINIIDTPGHVDFTIEVERSMRVLDGAVMVYCAVGGVQPQSETVWRQANKYRVPRIAFVNKMDRMGANFLRVVEQLKTRLAANPVPLQLAIGAEDAFTGVVDLVKMKAINWNDEDQGTTFTYEDIPADMQDLAEEWRSNLIEAAAEASEELMEKYLGGEELTEEEIKAGLRHRVLTNEIILVTCGSAFKNKGVQAMLDAVIEYLPAPTDVESIKGILPDGKDTSAERHSDDNEPFSALAFKIATDPFVGNLTFFRVYSGVVNSGDTVLNPVKDRKERFGRIVQMHANKREEIKEVRAGDIAAAIGLKDVTTGDTLCDINAPIILERMEFPEPVISVAIEPKTKADQEKMGIALGRLAQEDPSFRVSTDEESGQTIIAGMGELHLDVLVDRMRREFKVEANVGKPQVAYRETIRSTVEQEGKFVRQSGGRGQFGHVWLRIEPMEPGGVGYEFANEIVGGVVPKEYIPAVDKGIQEQMKNGVLAGYPIVDVKVALFDGSYHEVDSSEMAFKIAGSMGFKEGFMKAKPALLEPIMKVEVETPEDYMGDVIGDLNRRRGMIDGMEDMTTGKIVRAQVPLSEMFGYATDLRSQTQGRASYSMEFLKYNEAPSNVAQAIIEARKAK.

The tr-type G domain occupies 8–290 (ARYRNIGISA…AVIEYLPAPT (283 aa)). Residues 17–24 (AHIDAGKT), 88–92 (DTPGH), and 142–145 (NKMD) each bind GTP.

This sequence belongs to the TRAFAC class translation factor GTPase superfamily. Classic translation factor GTPase family. EF-G/EF-2 subfamily.

The protein localises to the cytoplasm. Functionally, catalyzes the GTP-dependent ribosomal translocation step during translation elongation. During this step, the ribosome changes from the pre-translocational (PRE) to the post-translocational (POST) state as the newly formed A-site-bound peptidyl-tRNA and P-site-bound deacylated tRNA move to the P and E sites, respectively. Catalyzes the coordinated movement of the two tRNA molecules, the mRNA and conformational changes in the ribosome. This Photorhabdus laumondii subsp. laumondii (strain DSM 15139 / CIP 105565 / TT01) (Photorhabdus luminescens subsp. laumondii) protein is Elongation factor G.